Reading from the N-terminus, the 252-residue chain is NAC domain-containing protein 83 (252 aa).

An NAC domain is found at 14-160 (LPPGFRFHPT…NWVLCRIFLK (147 aa)). A DNA-binding region spans residues 110–166 (VGLKKTLVFYKGKPPHGSRTDWIMHEYRLSSSPPSSMGPTQNWVLCRIFLKKRAGNK). 2 disordered regions span residues 165–194 (NKNDDDDGDSRNLRHNNNNNSSDQIEIITT) and 217–252 (LNLLPSSPSSDHASSGVTTEIFSSSDEETSSCNSFR). 2 stretches are compositionally biased toward low complexity: residues 180 to 194 (NNNNNSSDQIEIITT) and 219 to 252 (LLPSSPSSDHASSGVTTEIFSSSDEETSSCNSFR). The segment at 213-226 (RTTDLNLLPSSPSS) is PEST-like.

As to quaternary structure, interacts with NAC007/VND4, NAC026/VND5 and NAC030/VND7. Interacts with the mungbean yellow mosaic virus (MYMV) AC1 replication-associated protein. As to expression, expressed in xylem and phloem cells in roots and inflorescence stems. Highly expressed in senescent leaves. Expressed in roots, and abscission and dehiscence tissues, such as axils of bracts and abscission zones in cauline leaves and siliques.

It localises to the nucleus. Functionally, transcriptional repressor that negatively regulates the expression of genes involved in xylem vessel formation. Represses the transcriptional activation activity of NAC030/VND7, which regulates protoxylem vessel differentiation by promoting immature xylem vessel-specific genes expression. Transcriptional activator that regulates the COLD-REGULATED (COR15A and COR15B) and RESPONSIVE TO DEHYDRATION (LTI78/RD29A and LTI65/RD29B) genes by binding directly to their promoters. Mediates signaling crosstalk between salt stress response and leaf aging process. May play a role in DNA replication of mungbean yellow mosaic virus. This is NAC domain-containing protein 83 from Arabidopsis thaliana (Mouse-ear cress).